The sequence spans 302 residues: Nucleotide-binding protein STH186 (302 aa).

15–22 (GMSGAGKT) provides a ligand contact to ATP. Residue 66 to 69 (DIRG) coordinates GTP.

Belongs to the RapZ-like family.

Displays ATPase and GTPase activities. The polypeptide is Nucleotide-binding protein STH186 (Symbiobacterium thermophilum (strain DSM 24528 / JCM 14929 / IAM 14863 / T)).